We begin with the raw amino-acid sequence, 466 residues long: Cysteine--tRNA ligase (466 aa).

Residue Cys-33 coordinates Zn(2+). Positions 35–45 match the 'HIGH' region motif; that stretch reads PTVYDFAHIGN. Zn(2+)-binding residues include Cys-221, His-246, and Glu-250. A 'KMSKS' region motif is present at residues 279 to 283; the sequence is KMSKS. Lys-282 is an ATP binding site.

The protein belongs to the class-I aminoacyl-tRNA synthetase family. Monomer. It depends on Zn(2+) as a cofactor.

Its subcellular location is the cytoplasm. It catalyses the reaction tRNA(Cys) + L-cysteine + ATP = L-cysteinyl-tRNA(Cys) + AMP + diphosphate. The polypeptide is Cysteine--tRNA ligase (Sinorhizobium medicae (strain WSM419) (Ensifer medicae)).